A 190-amino-acid chain; its full sequence is Elongation factor P (190 aa).

It belongs to the elongation factor P family.

The protein resides in the cytoplasm. The protein operates within protein biosynthesis; polypeptide chain elongation. Its function is as follows. Involved in peptide bond synthesis. Stimulates efficient translation and peptide-bond synthesis on native or reconstituted 70S ribosomes in vitro. Probably functions indirectly by altering the affinity of the ribosome for aminoacyl-tRNA, thus increasing their reactivity as acceptors for peptidyl transferase. This is Elongation factor P from Amoebophilus asiaticus (strain 5a2).